A 149-amino-acid chain; its full sequence is Oligosaccharyltransferase complex subunit ostc (149 aa).

Residues 1–32 are Cytoplasmic-facing; it reads MESLYRVPFTVLECPNLKLKKPSWLHMPSAMT. A helical membrane pass occupies residues 33–53; the sequence is VYAMVVVSYFLITGGIIYDVI. The Extracellular segment spans residues 54 to 83; the sequence is VEPPSVGSMTDEHGHQRPVAFLAYRVNGQY. The chain crosses the membrane as a helical span at residues 84 to 104; that stretch reads IMEGLASSFLFTMGGLGFIIL. Over 105–117 the chain is Cytoplasmic; the sequence is DRSNAPNIPKLNR. A helical transmembrane segment spans residues 118–138; the sequence is FLLLFIGFVCVLLSFFMARVF. At 139-149 the chain is on the extracellular side; the sequence is MRMKLPGYLMG.

Belongs to the OSTC family. As to quaternary structure, specific component of the STT3A-containing form of the oligosaccharyltransferase (OST) complex.

It is found in the membrane. Its pathway is protein modification; protein glycosylation. Specific component of the STT3A-containing form of the oligosaccharyl transferase (OST) complex that catalyzes the initial transfer of a defined glycan (Glc(3)Man(9)GlcNAc(2) in eukaryotes) from the lipid carrier dolichol-pyrophosphate to an asparagine residue within an Asn-X-Ser/Thr consensus motif in nascent polypeptide chains, the first step in protein N-glycosylation. N-glycosylation occurs cotranslationally and the complex associates with the Sec61 complex at the channel-forming translocon complex that mediates protein translocation across the endoplasmic reticulum (ER). All subunits are required for a maximal enzyme activity. The chain is Oligosaccharyltransferase complex subunit ostc from Xenopus tropicalis (Western clawed frog).